Reading from the N-terminus, the 63-residue chain is MDENRQVRFFQPFKKMFQTSQTSSVTGWIGSCVGGTSVSLLRLDGPKRPCVYPSIFIAVWKTK.

The protein localises to the mitochondrion. This is an uncharacterized protein from Marchantia polymorpha (Common liverwort).